Here is a 225-residue protein sequence, read N- to C-terminus: Biosynthetic peptidoglycan transglycosylase (225 aa).

The chain crosses the membrane as a helical span at residues Val8–Val28.

This sequence belongs to the glycosyltransferase 51 family.

It is found in the cell inner membrane. It carries out the reaction [GlcNAc-(1-&gt;4)-Mur2Ac(oyl-L-Ala-gamma-D-Glu-L-Lys-D-Ala-D-Ala)](n)-di-trans,octa-cis-undecaprenyl diphosphate + beta-D-GlcNAc-(1-&gt;4)-Mur2Ac(oyl-L-Ala-gamma-D-Glu-L-Lys-D-Ala-D-Ala)-di-trans,octa-cis-undecaprenyl diphosphate = [GlcNAc-(1-&gt;4)-Mur2Ac(oyl-L-Ala-gamma-D-Glu-L-Lys-D-Ala-D-Ala)](n+1)-di-trans,octa-cis-undecaprenyl diphosphate + di-trans,octa-cis-undecaprenyl diphosphate + H(+). It participates in cell wall biogenesis; peptidoglycan biosynthesis. Peptidoglycan polymerase that catalyzes glycan chain elongation from lipid-linked precursors. In Acinetobacter baumannii (strain ATCC 17978 / DSM 105126 / CIP 53.77 / LMG 1025 / NCDC KC755 / 5377), this protein is Biosynthetic peptidoglycan transglycosylase.